The sequence spans 274 residues: Bis(5'-nucleosyl)-tetraphosphatase, symmetrical (274 aa).

This sequence belongs to the Ap4A hydrolase family.

It carries out the reaction P(1),P(4)-bis(5'-adenosyl) tetraphosphate + H2O = 2 ADP + 2 H(+). In terms of biological role, hydrolyzes diadenosine 5',5'''-P1,P4-tetraphosphate to yield ADP. The polypeptide is Bis(5'-nucleosyl)-tetraphosphatase, symmetrical (Shewanella sp. (strain ANA-3)).